We begin with the raw amino-acid sequence, 636 residues long: Eisosome protein sle1 (636 aa).

The tract at residues methionine 1–glycine 297 is required for targeting the protein to eisosomes. 6 disordered regions span residues alanine 111–asparagine 205, tyrosine 222–valine 284, aspartate 313–phenylalanine 387, glutamine 400–leucine 451, aspartate 467–alanine 550, and proline 572–asparagine 604. 5 stretches are compositionally biased toward polar residues: residues proline 131–glutamine 159, arginine 166–serine 178, arginine 188–alanine 204, serine 237–serine 255, and serine 315–arginine 354. A compositionally biased stretch (low complexity) spans serine 355 to serine 383. Composition is skewed to polar residues over residues glutamine 400–glutamine 412 and proline 422–glutamine 439. Positions threonine 471 to alanine 484 are enriched in low complexity. Residues serine 503 to arginine 512 are compositionally biased toward basic and acidic residues. Positions proline 572–glutamine 589 are enriched in polar residues.

In terms of assembly, component of eisosomes, large cytoplasmic protein assemblies that localize to specialized domains termed MCCs on the plasma membrane.

The protein resides in the cytoplasm. It is found in the cell cortex. The protein localises to the cell tip. Functionally, important for the biogenesis of filamentous eisosomes, large cytoplasmic protein assemblies that localize to specialized domains on the plasma membrane to cluster specific proteins at sites of membrane invaginations. This is Eisosome protein sle1 (sle1) from Schizosaccharomyces pombe (strain 972 / ATCC 24843) (Fission yeast).